The chain runs to 296 residues: Uricase (296 aa).

Active-site charge relay system residues include Lys14 and Thr61. Residues Thr61, Asp62, Phe163, Arg180, Val229, Gln230, and Asn256 each contribute to the urate site. The active-site Charge relay system is the His258.

It belongs to the uricase family.

It is found in the peroxisome. It localises to the cytoplasm. The protein localises to the nucleus. It carries out the reaction urate + O2 + H2O = 5-hydroxyisourate + H2O2. The protein operates within purine metabolism; urate degradation; (S)-allantoin from urate: step 1/3. Its function is as follows. Catalyzes the oxidation of uric acid to 5-hydroxyisourate, which is further processed to form (S)-allantoin. In Schizosaccharomyces pombe (strain 972 / ATCC 24843) (Fission yeast), this protein is Uricase.